We begin with the raw amino-acid sequence, 149 residues long: Stathmin (149 aa).

Alanine 2 is modified (N-acetylalanine). Serine 4 carries the post-translational modification Phosphoserine. The SLD domain occupies 4 to 145 (SDIQVKELEK…NKESKDPADE (142 aa)). An N6-acetyllysine modification is found at lysine 9. A Phosphoserine modification is found at serine 16. Position 25 is a phosphoserine; by CDK1, MAPK1 and MAPK3 (serine 25). Lysine 29 bears the N6-methyllysine mark. The residue at position 31 (serine 31) is a Phosphoserine. Serine 38 bears the Phosphoserine; by CDK1, MAPK1 and MAPK3 mark. Residues 41–140 (KKKDLSLEEI…EEVRKNKESK (100 aa)) adopt a coiled-coil conformation. At serine 63 the chain carries Phosphoserine; by PKA. An N6-acetyllysine mark is found at lysine 100 and lysine 119. The segment covering 121–143 (ERLREKDKHIEEVRKNKESKDPA) has biased composition (basic and acidic residues). The tract at residues 121–149 (ERLREKDKHIEEVRKNKESKDPADETEAD) is disordered.

It belongs to the stathmin family. Binds to two alpha/beta-tubulin heterodimers. Interacts with KIST. Post-translationally, many different phosphorylated forms are observed depending on specific combinations among the sites which can be phosphorylated. MAPK is responsible for the phosphorylation of stathmin in response to NGF. Phosphorylation at Ser-16 seems to be required for neuron polarization.

The protein resides in the cytoplasm. Its subcellular location is the cytoskeleton. Involved in the regulation of the microtubule (MT) filament system by destabilizing microtubules. Prevents assembly and promotes disassembly of microtubules. Its phosphorylation at Ser-16 may be required for axon formation during neurogenesis. Involved in the control of the learned and innate fear. In Bos taurus (Bovine), this protein is Stathmin (STMN1).